The primary structure comprises 167 residues: Secretion monitor (167 aa).

Residues Met-1 to Ala-36 form the signal peptide.

The protein belongs to the SecM family.

The protein resides in the cytoplasm. It is found in the cytosol. It localises to the periplasm. Functionally, regulates secA expression by translational coupling of the secM secA operon. Translational pausing at a specific Pro residue 5 residues before the end of the protein may allow disruption of a mRNA repressor helix that normally suppresses secA translation initiation. In Erwinia tasmaniensis (strain DSM 17950 / CFBP 7177 / CIP 109463 / NCPPB 4357 / Et1/99), this protein is Secretion monitor.